Reading from the N-terminus, the 245-residue chain is MTLTASSSSRAVTNSPVVVALDYHNCDDALSFVDKIDPRDCRLKVGKEMFTLFGPQFVRELQQRGFDIFLDLKFHDIPNTAAHAVAAAADLGVWMVNVHASGGARMMTAAREALVPFGKDAPLLIAVTVLTSMEASDLADLGVTLSPADYAERLAALTQKCGLDGVVCSAQEAVRFKQVFGQEFKLVTPGIRPQGSEAGDQRRIMTPEQALAAGVDYMVIGRPVTQSVDPAQTLKAINASLQRSA.

Substrate-binding positions include aspartate 22, lysine 44, 71–80, threonine 131, arginine 192, glutamine 201, glycine 221, and arginine 222; that span reads DLKFHDIPNT. Lysine 73 (proton donor) is an active-site residue.

It belongs to the OMP decarboxylase family. Type 1 subfamily. In terms of assembly, homodimer.

The catalysed reaction is orotidine 5'-phosphate + H(+) = UMP + CO2. Its pathway is pyrimidine metabolism; UMP biosynthesis via de novo pathway; UMP from orotate: step 2/2. Its function is as follows. Catalyzes the decarboxylation of orotidine 5'-monophosphate (OMP) to uridine 5'-monophosphate (UMP). The protein is Orotidine 5'-phosphate decarboxylase of Shigella flexneri serotype 5b (strain 8401).